We begin with the raw amino-acid sequence, 247 residues long: Probable transcriptional regulatory protein Gura_1416 (247 aa).

It belongs to the TACO1 family.

It localises to the cytoplasm. The polypeptide is Probable transcriptional regulatory protein Gura_1416 (Geotalea uraniireducens (strain Rf4) (Geobacter uraniireducens)).